Here is an 876-residue protein sequence, read N- to C-terminus: Valine--tRNA ligase (876 aa).

Residues 43–53 (PNVTGVLHMGH) carry the 'HIGH' region motif. The 'KMSKS' region signature appears at 534–538 (KMSKS). K537 contributes to the ATP binding site. The stretch at 847–876 (PEKVVAIEKAKKADAEAKIEALKASLKSLS) forms a coiled coil.

The protein belongs to the class-I aminoacyl-tRNA synthetase family. ValS type 1 subfamily. As to quaternary structure, monomer.

It localises to the cytoplasm. The catalysed reaction is tRNA(Val) + L-valine + ATP = L-valyl-tRNA(Val) + AMP + diphosphate. Catalyzes the attachment of valine to tRNA(Val). As ValRS can inadvertently accommodate and process structurally similar amino acids such as threonine, to avoid such errors, it has a 'posttransfer' editing activity that hydrolyzes mischarged Thr-tRNA(Val) in a tRNA-dependent manner. The chain is Valine--tRNA ligase from Christiangramia forsetii (strain DSM 17595 / CGMCC 1.15422 / KT0803) (Gramella forsetii).